Reading from the N-terminus, the 1351-residue chain is Bromodomain-containing protein 4A (1351 aa).

7 disordered regions span residues 1 to 23, 35 to 58, 168 to 244, 285 to 368, 478 to 638, 700 to 799, and 821 to 1334; these read MSSETGLGTRLRATSGMGDGIEG, PQPQATVMNNPDPPEITRPNQPKR, ETEL…RPPA, AAQP…DTKT, EPEE…PMSY, CLRK…LDSS, and PDLP…PSID. The Bromo 1 domain occupies 58–164; sequence RQTNQLQYLL…KLFLQKISEM (107 aa). Low complexity predominate over residues 208-219; it reads VKPPVTPVSKPS. A compositionally biased stretch (pro residues) spans 220-235; it reads TPTPPTVTRAPTPPQT. Basic and acidic residues predominate over residues 327–343; sequence PRKENGRQIRPTKKTEV. Over residues 349 to 359 the composition is skewed to pro residues; that stretch reads PAPPVLHPQPA. The Bromo 2 domain occupies 366 to 475; the sequence is TKTSEQLRYC…DVFEMRFAKM (110 aa). Over residues 482–504 the composition is skewed to pro residues; that stretch reads APAPVPSLAPGPPAPSIKGPPPT. The NPS region stretch occupies residues 504–522; that stretch reads TSSDSSSDSTSDSESSSDS. The segment covering 505–517 has biased composition (low complexity); sequence SSDSSSDSTSDSE. The interval 543-598 is BID region; that stretch reads QLAALSQPQPNKPKKKEREKRKEKHKRKEEVEEPRKGRIREPPAKKPKKSVQGSGG. Over residues 554–569 the composition is skewed to basic residues; it reads KPKKKEREKRKEKHKR. Residues 570–586 show a composition bias toward basic and acidic residues; the sequence is KEEVEEPRKGRIREPPA. Positions 607–621 are enriched in pro residues; sequence PPPAPRPARPAPPSA. In terms of domain architecture, NET spans 624-708; the sequence is ESSEEETQRC…SCLRKKRKSQ (85 aa). Residues 629–638 are compositionally biased toward basic and acidic residues; it reads ETQRCRPMSY. Residues 725 to 738 show a composition bias toward low complexity; sequence SSSESESSSESSTS. The span at 751–767 shows a compositional bias: basic residues; it reads QKKKGHSGRESRKHHHP. A compositionally biased stretch (low complexity) spans 788-799; that stretch reads PSYPLPSSLDSS. Pro residues predominate over residues 872-890; it reads PAMPPSASPPPPAPQPPQQ. Residues 892 to 902 are compositionally biased toward basic residues; it reads HVHHHHHHHAQ. Polar residues predominate over residues 927 to 953; that stretch reads LQKSQQPPTQSPIHSLLTSVKVQSQTP. A compositionally biased stretch (pro residues) spans 968 to 983; that stretch reads VYPPPPSTATTAPPPA. Low complexity-rich tracts occupy residues 994–1003 and 1011–1028; these read PVVPQQLPAG and QQQQHPALQGTLVSSHQQ. Positions 1051-1350 are C-terminal (CTD) region; the sequence is RQQKQETYPG…LMEIFEQNLF (300 aa). A compositionally biased stretch (pro residues) spans 1075–1089; the sequence is PPVPPYPGLTHPPSP. Composition is skewed to basic and acidic residues over residues 1150-1161 and 1176-1197; these read PRPDLKKMDGGR and PEKEKQKQEPKTPVAPKKDIKI. The segment covering 1214–1224 has biased composition (polar residues); sequence PTSAGKSTSDS. The span at 1226-1284 shows a compositional bias: basic and acidic residues; that stretch reads ELFRRQAREKEERERALKLQAEQAERVRREQDRMSRTREDDEVQDQARKAHEEARRRQE. Residues 1301–1310 show a composition bias toward low complexity; it reads SPAQSSQPMM. The segment covering 1311–1323 has biased composition (basic and acidic residues); that stretch reads DQREMARKREQER.

It belongs to the BET family.

The protein localises to the nucleus. It is found in the chromosome. Its function is as follows. Chromatin reader protein that recognizes and binds acetylated histones and plays a key role in transmission of epigenetic memory across cell divisions and transcription regulation. Remains associated with acetylated chromatin throughout the entire cell cycle and provides epigenetic memory for postmitotic G1 gene transcription by preserving acetylated chromatin status and maintaining high-order chromatin structure. During interphase, plays a key role in regulating the transcription of signal-inducible genes by associating with the P-TEFb complex and recruiting it to promoters. This Xenopus laevis (African clawed frog) protein is Bromodomain-containing protein 4A (brd4-a).